Here is a 159-residue protein sequence, read N- to C-terminus: Transcriptional repressor NrdR (159 aa).

Over residues Met1–Ser11 the composition is skewed to polar residues. Positions Met1–Ser21 are disordered. The segment at Cys3–Cys34 is a zinc-finger region. One can recognise an ATP-cone domain in the interval Val49–Asp139.

The protein belongs to the NrdR family. Requires Zn(2+) as cofactor.

Its function is as follows. Negatively regulates transcription of bacterial ribonucleotide reductase nrd genes and operons by binding to NrdR-boxes. This Prochlorococcus marinus (strain MIT 9215) protein is Transcriptional repressor NrdR.